We begin with the raw amino-acid sequence, 311 residues long: Salutaridine reductase (311 aa).

Position 17 to 40 (17 to 40 (VTGGNKGIGFEICKQLSSSGIMVV)) interacts with NADP(+). Ser-180 contacts substrate. Tyr-236 serves as the catalytic Proton acceptor.

It belongs to the short-chain dehydrogenases/reductases (SDR) family.

It catalyses the reaction (7S)-salutaridinol + NADP(+) = salutaridine + NADPH + H(+). Its activity is regulated as follows. Subject to substrate inhibition at salutaridine concentrations higher than 20 to 30 uM. Its function is as follows. Involved in biosynthesis of morphinan-type benzylisoquinoline alkaloids. Catalyzes the stereospecific conversion of salutaridine to salutaridinol. This chain is Salutaridine reductase, found in Papaver bracteatum (Great scarlet poppy).